The primary structure comprises 462 residues: Asparagine--tRNA ligase (462 aa).

It belongs to the class-II aminoacyl-tRNA synthetase family. Homodimer.

Its subcellular location is the cytoplasm. The catalysed reaction is tRNA(Asn) + L-asparagine + ATP = L-asparaginyl-tRNA(Asn) + AMP + diphosphate + H(+). This chain is Asparagine--tRNA ligase, found in Thermosynechococcus vestitus (strain NIES-2133 / IAM M-273 / BP-1).